The following is a 335-amino-acid chain: 2-acylglycerol O-acyltransferase 1 (335 aa).

The next 2 helical transmembrane spans lie at 24–44 (WLLS…FLII) and 104–124 (YIFG…NFCT). 2 N-linked (GlcNAc...) asparagine glycosylation sites follow: N125 and N180.

It belongs to the diacylglycerol acyltransferase family.

The protein resides in the endoplasmic reticulum membrane. The enzyme catalyses a 2-acylglycerol + an acyl-CoA = a 1,2-diacylglycerol + CoA. The catalysed reaction is 2-(9Z-octadecenoyl)-glycerol + butanoyl-CoA = 1-butanoyl-2-(9Z-octadecenoyl)-glycerol + CoA. It carries out the reaction 2-(9Z-octadecenoyl)-glycerol + octanoyl-CoA = 1-octanoyl-2-(9Z-octadecenoyl)-glycerol + CoA. It catalyses the reaction 2-(9Z-octadecenoyl)-glycerol + dodecanoyl-CoA = 1-dodecanoyl-2-(9Z-octadecenoyl)-glycerol + CoA. The enzyme catalyses 2-(9Z-octadecenoyl)-glycerol + tetradecanoyl-CoA = 1-tetradecanoyl-2-(9Z-octadecenoyl)-glycerol + CoA. The catalysed reaction is 2-(9Z-octadecenoyl)-glycerol + hexadecanoyl-CoA = 1-hexadecanoyl-2-(9Z-octadecenoyl)-glycerol + CoA. It carries out the reaction 2-(9Z-octadecenoyl)-glycerol + octadecanoyl-CoA = 1-octadecanoyl-2-(9Z-octadecenoyl)-glycerol + CoA. It catalyses the reaction eicosanoyl-CoA + 2-(9Z-octadecenoyl)-glycerol = 1-eicosanoyl-2-(9Z-octadecenoyl)-glycerol + CoA. The enzyme catalyses 2-(9Z-octadecenoyl)-glycerol + (9Z)-octadecenoyl-CoA = 1,2-di-(9Z-octadecenoyl)-glycerol + CoA. The catalysed reaction is 2-(9Z-octadecenoyl)-glycerol + (9Z,12Z)-octadecadienoyl-CoA = 1-(9Z,12Z-octadecadienoyl)-2-(9Z-octadecenoyl)-glycerol + CoA. It carries out the reaction 2-(9Z-octadecenoyl)-glycerol + (5Z,8Z,11Z,14Z)-eicosatetraenoyl-CoA = 1-(5Z,8Z,11Z,14Z-eicosatetraenoyl)-2-(9Z-octadecenoyl)-glycerol + CoA. It catalyses the reaction a 2-acylglycerol + an acyl-CoA = a 1,2-diacyl-sn-glycerol + CoA. The enzyme catalyses a 2-acylglycerol + an acyl-CoA = a 2,3-diacyl-sn-glycerol + CoA. The catalysed reaction is a 1-acylglycerol + an acyl-CoA = a 1,2-diacylglycerol + CoA. It carries out the reaction 1-dodecanoylglycerol + (9Z)-octadecenoyl-CoA = 1-dodecanoyl-2-(9Z-octadecenoyl)-glycerol + CoA. It catalyses the reaction 1-tetradecanoylglycerol + (9Z)-octadecenoyl-CoA = 1-tetradecanoyl-2-(9Z-octadecenoyl)-glycerol + CoA. The enzyme catalyses 1-hexadecanoylglycerol + (9Z)-octadecenoyl-CoA = 1-hexadecanoyl-2-(9Z-octadecenoyl)-glycerol + CoA. The catalysed reaction is 1-(9Z-octadecenoyl)-glycerol + (9Z)-octadecenoyl-CoA = 1,2-di-(9Z-octadecenoyl)-glycerol + CoA. It carries out the reaction 1-(9Z,12Z-octadecadienoyl)-glycerol + (9Z)-octadecenoyl-CoA = 1-(9Z,12Z-octadecadienoyl)-2-(9Z-octadecenoyl)-glycerol + CoA. It catalyses the reaction 1-(9Z,12Z,15Z-octadecatrienoyl)-glycerol + (9Z)-octadecenoyl-CoA = 1-(9Z,12Z,15Z-octadecatrienoyl)-2-(9Z-octadecenoyl)-glycerol + CoA. The enzyme catalyses 1-(5Z,8Z,11Z,14Z-eicosatetraenoyl)-glycerol + (9Z)-octadecenoyl-CoA = 1-(5Z,8Z,11Z,14Z-eicosatetraenoyl)-2-(9Z-octadecenoyl)-glycerol + CoA. The catalysed reaction is a 1-acylglycerol + an acyl-CoA = a 1,3-diacylglycerol + CoA. It carries out the reaction 1-dodecanoylglycerol + (9Z)-octadecenoyl-CoA = 1-dodecanoyl-3-(9Z-octadecenoyl)-glycerol + CoA. It catalyses the reaction 1-hexadecanoylglycerol + (9Z)-octadecenoyl-CoA = 1-(9Z-octadecenoyl)-3-hexadecanoylglycerol + CoA. The enzyme catalyses 1-octadecanoylglycerol + (9Z)-octadecenoyl-CoA = 1-octadecanoyl-3-(9Z-octadecenoyl)-glycerol + CoA. The catalysed reaction is 1-(9Z-octadecenoyl)-sn-glycerol + (9Z)-octadecenoyl-CoA = 1,3-di-(9Z-octadecenoyl)-glycerol + CoA. It carries out the reaction 1-(9Z,12Z-octadecadienoyl)-glycerol + (9Z)-octadecenoyl-CoA = 1-(9Z-octadecenoyl)-3-(9Z,12Z-octadecadienoyl)-glycerol + CoA. It catalyses the reaction 1-(9Z,12Z,15Z-octadecatrienoyl)-glycerol + (9Z)-octadecenoyl-CoA = 1-(9Z,12Z,15Z-octadecatrienoyl)-3-(9Z-octadecenoyl)-glycerol + CoA. The enzyme catalyses a 1-acyl-sn-glycerol + an acyl-CoA = a 1,3-diacyl-sn-glycerol + CoA. The catalysed reaction is a 3-acyl-sn-glycerol + an acyl-CoA = a 1,3-diacyl-sn-glycerol + CoA. It carries out the reaction 3-octadecanoyl-sn-glycerol + (9Z)-octadecenoyl-CoA = 1-(9Z-octadecenoyl)-3-octadecanoyl-sn-glycerol + CoA. Its pathway is glycerolipid metabolism; triacylglycerol biosynthesis. In terms of biological role, involved in glycerolipid synthesis and lipid metabolism. Catalyzes the formation of diacylglycerol, the precursor of triacylglycerol, by transferring the acyl chain of a fatty acyl-CoA to a monoacylglycerol, mainly at the sn-1 or sn-3 positions. It uses both sn-2-monoacylglycerol (2-acylglycerol) and sn-1-monoacylglycerol (1-acyl-sn-glycerol) equally well as substrates, and uses sn-3-monoacylglycerol (3-acyl-sn-glycerol) with lower efficiency. Probably not involved in absorption of dietary fat in the small intestine. This is 2-acylglycerol O-acyltransferase 1 (MOGAT1) from Bos taurus (Bovine).